Consider the following 1828-residue polypeptide: Protein TIC 214 (1828 aa).

A run of 6 helical transmembrane segments spans residues 18–38 (IINS…FSIG), 64–84 (FITG…HLAM), 87–107 (PYTI…WKNH), 124–144 (FSIQ…HFVL), 172–192 (VGWL…LFWI), and 222–242 (VNIF…SPIL). Positions 270 to 279 (SEAKETKQEQ) are enriched in basic and acidic residues. Disordered stretches follow at residues 270–301 (SEAK…PNKL), 618–637 (DLQQ…HAIR), 741–763 (EFKT…EDKK), and 1533–1571 (KEEF…RQSK). The span at 1550-1562 (KDVEKDYAKSDIK) shows a compositional bias: basic and acidic residues.

This sequence belongs to the TIC214 family. As to quaternary structure, part of the Tic complex.

It is found in the plastid. It localises to the chloroplast inner membrane. Involved in protein precursor import into chloroplasts. May be part of an intermediate translocation complex acting as a protein-conducting channel at the inner envelope. The protein is Protein TIC 214 of Calycanthus floridus var. glaucus (Eastern sweetshrub).